Reading from the N-terminus, the 79-residue chain is Translational regulator CsrA (79 aa).

Belongs to the CsrA/RsmA family. In terms of assembly, homodimer; the beta-strands of each monomer intercalate to form a hydrophobic core, while the alpha-helices form wings that extend away from the core.

It localises to the cytoplasm. Its function is as follows. A translational regulator that binds mRNA to regulate translation initiation and/or mRNA stability. Usually binds in the 5'-UTR at or near the Shine-Dalgarno sequence preventing ribosome-binding, thus repressing translation. Its main target seems to be the major flagellin gene, while its function is anatagonized by FliW. The protein is Translational regulator CsrA of Syntrophus aciditrophicus (strain SB).